The following is a 248-amino-acid chain: MTETARTTIDASEIEHFSRIAAQWWDPQGKFRPLHKFNPTRLAYIKEKVCAKFNRDPNAPRPLEGLRFLDIGCGGGLLCEPMARLGATVIGADASATNIEVAKIHAAQSSLDIDYRATTTEALADAGEKFDVVLNMEVVEHVSDVDLFMSATSAMVKPGGLMFVATINRTLKAYGLAIIGAEYVLRWLPRGTHQYEKLVRPEELEAAFSKADLRLIDKLGVTYNPLADSWNRSRDMDVNYMVLAERPA.

Positions 41, 72, 93, and 136 each coordinate S-adenosyl-L-methionine.

It belongs to the methyltransferase superfamily. UbiG/COQ3 family.

The catalysed reaction is a 3-demethylubiquinol + S-adenosyl-L-methionine = a ubiquinol + S-adenosyl-L-homocysteine + H(+). It carries out the reaction a 3-(all-trans-polyprenyl)benzene-1,2-diol + S-adenosyl-L-methionine = a 2-methoxy-6-(all-trans-polyprenyl)phenol + S-adenosyl-L-homocysteine + H(+). It participates in cofactor biosynthesis; ubiquinone biosynthesis. Its function is as follows. O-methyltransferase that catalyzes the 2 O-methylation steps in the ubiquinone biosynthetic pathway. The polypeptide is Ubiquinone biosynthesis O-methyltransferase (Brucella melitensis biotype 2 (strain ATCC 23457)).